The following is a 572-amino-acid chain: Acyl-coenzyme A synthetase ACSM2, mitochondrial (572 aa).

Residues 1-46 (MHWLWKIPRLCTFWGTEMFHRTFHMNIKKLMPIQWGHQEVPAKFNF) constitute a mitochondrion transit peptide. Q139 is a binding site for CoA. ATP contacts are provided by residues 221–229 (TSGTSGPPK), 359–364 (EIYGQT), D446, and R461. Substrate is bound at residue T364. 469 to 471 (SGY) serves as a coordination point for CoA. R472 contributes to the substrate binding site. Residues R501, K532, and 540-542 (YPR) contribute to the CoA site. Residue K557 coordinates ATP.

This sequence belongs to the ATP-dependent AMP-binding enzyme family. In terms of assembly, monomer. The cofactor is Mg(2+). It depends on Mn(2+) as a cofactor. As to expression, detected in kidney, in proximal tubules.

It is found in the mitochondrion. It carries out the reaction a medium-chain fatty acid + ATP + CoA = a medium-chain fatty acyl-CoA + AMP + diphosphate. The enzyme catalyses benzoate + ATP + CoA = benzoyl-CoA + AMP + diphosphate. The catalysed reaction is hexanoate + ATP + CoA = hexanoyl-CoA + AMP + diphosphate. It catalyses the reaction butanoate + ATP + CoA = butanoyl-CoA + AMP + diphosphate. It carries out the reaction octanoate + ATP + CoA = octanoyl-CoA + AMP + diphosphate. The enzyme catalyses decanoate + ATP + CoA = decanoyl-CoA + AMP + diphosphate. In terms of biological role, catalyzes the activation of fatty acids by CoA to produce an acyl-CoA, the first step in fatty acid metabolism. Capable of activating medium-chain fatty acids (e.g. butyric (C4) to decanoic (C10) acids), and certain carboxylate-containing xenobiotics, e.g. benzoate. The sequence is that of Acyl-coenzyme A synthetase ACSM2, mitochondrial (Acsm2) from Rattus norvegicus (Rat).